A 556-amino-acid chain; its full sequence is Arginine--tRNA ligase 1 (556 aa).

Positions 132–142 (ANPTGDLHLGH) match the 'HIGH' region motif.

This sequence belongs to the class-I aminoacyl-tRNA synthetase family. As to quaternary structure, monomer.

The protein localises to the cytoplasm. It carries out the reaction tRNA(Arg) + L-arginine + ATP = L-arginyl-tRNA(Arg) + AMP + diphosphate. In Bacillus anthracis, this protein is Arginine--tRNA ligase 1.